The sequence spans 404 residues: 1-deoxy-D-xylulose 5-phosphate reductoisomerase (404 aa).

Residues threonine 5, glycine 6, serine 7, isoleucine 8, glycine 31, arginine 32, asparagine 33, and asparagine 121 each coordinate NADPH. Residue lysine 122 participates in 1-deoxy-D-xylulose 5-phosphate binding. Glutamate 123 contacts NADPH. Position 147 (aspartate 147) interacts with Mn(2+). Residues serine 148, glutamate 149, serine 185, and histidine 208 each contribute to the 1-deoxy-D-xylulose 5-phosphate site. Position 149 (glutamate 149) interacts with Mn(2+). Glycine 214 lines the NADPH pocket. 1-deoxy-D-xylulose 5-phosphate is bound by residues serine 221, asparagine 226, lysine 227, and glutamate 230. Glutamate 230 is a binding site for Mn(2+).

This sequence belongs to the DXR family. It depends on Mg(2+) as a cofactor. Requires Mn(2+) as cofactor.

It carries out the reaction 2-C-methyl-D-erythritol 4-phosphate + NADP(+) = 1-deoxy-D-xylulose 5-phosphate + NADPH + H(+). It participates in isoprenoid biosynthesis; isopentenyl diphosphate biosynthesis via DXP pathway; isopentenyl diphosphate from 1-deoxy-D-xylulose 5-phosphate: step 1/6. In terms of biological role, catalyzes the NADPH-dependent rearrangement and reduction of 1-deoxy-D-xylulose-5-phosphate (DXP) to 2-C-methyl-D-erythritol 4-phosphate (MEP). The protein is 1-deoxy-D-xylulose 5-phosphate reductoisomerase of Prochlorococcus marinus subsp. pastoris (strain CCMP1986 / NIES-2087 / MED4).